We begin with the raw amino-acid sequence, 399 residues long: Elongation factor Tu (399 aa).

The tr-type G domain occupies 10–204 (KPHVNIGTIG…AVDASIPEPE (195 aa)). Residues 19–26 (GHVDHGKT) are G1. 19 to 26 (GHVDHGKT) serves as a coordination point for GTP. Threonine 26 contributes to the Mg(2+) binding site. A G2 region spans residues 60-64 (GITIN). Residues 81-84 (DCPG) form a G3 region. Residues 81–85 (DCPGH) and 136–139 (NKCD) contribute to the GTP site. Residues 136 to 139 (NKCD) are G4. The interval 174 to 176 (SGL) is G5.

It belongs to the TRAFAC class translation factor GTPase superfamily. Classic translation factor GTPase family. EF-Tu/EF-1A subfamily. As to quaternary structure, monomer.

It localises to the cytoplasm. It catalyses the reaction GTP + H2O = GDP + phosphate + H(+). Functionally, GTP hydrolase that promotes the GTP-dependent binding of aminoacyl-tRNA to the A-site of ribosomes during protein biosynthesis. The sequence is that of Elongation factor Tu from Prochlorococcus marinus (strain MIT 9313).